Here is a 272-residue protein sequence, read N- to C-terminus: MSTAKSDIKKVTTHQLQEMKNRGEKISMLTAYDYSMAKILDAAGVDVILVGDSASNVMAGHETTLPITLDQMIYHASSVIRAINRALVVVDLPFGSYQGNSSEALRSAIRIMKESGAHAVKMEGGIEIKESVLCIISAGIPVMGHLGLMPQSIYKFGTYVVRAREEEEANKLIADAKILEESGCFGLVLEKIPASLSKTVTHQLQIPTIGIGAGPDVDGQVLVTHDLLGINNEFHPRFLRTYANLQATISTAVTSYIDDVKSKNFPNENECY.

Mg(2+)-binding residues include D52 and D91. Residues 52–53 (DS), D91, and K121 contribute to the 3-methyl-2-oxobutanoate site. Residue E123 participates in Mg(2+) binding. Residue E190 is the Proton acceptor of the active site.

It belongs to the PanB family. In terms of assembly, homodecamer; pentamer of dimers. It depends on Mg(2+) as a cofactor.

It is found in the cytoplasm. It catalyses the reaction 3-methyl-2-oxobutanoate + (6R)-5,10-methylene-5,6,7,8-tetrahydrofolate + H2O = 2-dehydropantoate + (6S)-5,6,7,8-tetrahydrofolate. It functions in the pathway cofactor biosynthesis; (R)-pantothenate biosynthesis; (R)-pantoate from 3-methyl-2-oxobutanoate: step 1/2. Its function is as follows. Catalyzes the reversible reaction in which hydroxymethyl group from 5,10-methylenetetrahydrofolate is transferred onto alpha-ketoisovalerate to form ketopantoate. The chain is 3-methyl-2-oxobutanoate hydroxymethyltransferase from Cytophaga hutchinsonii (strain ATCC 33406 / DSM 1761 / CIP 103989 / NBRC 15051 / NCIMB 9469 / D465).